The primary structure comprises 662 residues: Glycogen debranching enzyme (662 aa).

D338 acts as the Nucleophile in catalysis. E373 functions as the Proton donor in the catalytic mechanism.

This sequence belongs to the glycosyl hydrolase 13 family.

It catalyses the reaction Hydrolysis of (1-&gt;6)-alpha-D-glucosidic linkages to branches with degrees of polymerization of three or four glucose residues in limit dextrin.. It functions in the pathway glycan degradation; glycogen degradation. Functionally, removes maltotriose and maltotetraose chains that are attached by 1,6-alpha-linkage to the limit dextrin main chain, generating a debranched limit dextrin. This is Glycogen debranching enzyme from Yersinia pseudotuberculosis serotype I (strain IP32953).